A 110-amino-acid chain; its full sequence is Nucleoid-associated protein KPK_4227 (110 aa).

The interval 1-22 (MFGGKGGLGNLMKQAQQMQDKM) is disordered.

It belongs to the YbaB/EbfC family. As to quaternary structure, homodimer.

Its subcellular location is the cytoplasm. It is found in the nucleoid. Binds to DNA and alters its conformation. May be involved in regulation of gene expression, nucleoid organization and DNA protection. This is Nucleoid-associated protein KPK_4227 from Klebsiella pneumoniae (strain 342).